A 160-amino-acid chain; its full sequence is Transmembrane protein 191A (160 aa).

The helical transmembrane segment at 24–44 (FCFPLDFVSNLFWIFASKFII) threads the bilayer.

This sequence belongs to the TMEM191 family.

It is found in the membrane. This is Transmembrane protein 191A (TMEM191A) from Homo sapiens (Human).